We begin with the raw amino-acid sequence, 349 residues long: Homeobox protein engrailed (349 aa).

Disordered stretches follow at residues 26 to 53 (DGPSPLSASTPGPSPDRPGSATMSSPLS), 146 to 210 (GKET…PLPP), 228 to 252 (PSSGRSPRCRRMKKDKAITPDEKRP), and 327 to 349 (STIPTEDDEDDEISSTSLQARIE). 2 stretches are compositionally biased toward basic and acidic residues: residues 173 to 188 (QMKKKEEIKEEARTES) and 242 to 252 (DKAITPDEKRP). The segment at residues 249 to 308 (EKRPRTAFTAEQLSRLKHEFNENRYLTERRRQDLARELGLHENQIKIWFQNNRAKLKKSS) is a DNA-binding region (homeobox).

It belongs to the engrailed homeobox family.

The protein localises to the nucleus. The protein is Homeobox protein engrailed of Artemia franciscana (Brine shrimp).